The chain runs to 471 residues: Glutamate--tRNA ligase (471 aa).

Positions 9–19 match the 'HIGH' region motif; that stretch reads PSPTGYLHVGG. C98, C100, C125, and H127 together coordinate Zn(2+). A 'KMSKS' region motif is present at residues 237–241; it reads KLSKR. ATP is bound at residue K240.

Belongs to the class-I aminoacyl-tRNA synthetase family. Glutamate--tRNA ligase type 1 subfamily. As to quaternary structure, monomer. The cofactor is Zn(2+).

It is found in the cytoplasm. It carries out the reaction tRNA(Glu) + L-glutamate + ATP = L-glutamyl-tRNA(Glu) + AMP + diphosphate. In terms of biological role, catalyzes the attachment of glutamate to tRNA(Glu) in a two-step reaction: glutamate is first activated by ATP to form Glu-AMP and then transferred to the acceptor end of tRNA(Glu). The polypeptide is Glutamate--tRNA ligase (Shigella flexneri).